A 458-amino-acid chain; its full sequence is Selection and upkeep of intraepithelial T-cells protein 3 (458 aa).

The signal sequence occupies residues 1–24 (MGSIQIIFAAYCVVLCVLQMLVLS). Residues 25–237 (SEQFTITGLE…ESISIVLTGD (213 aa)) lie on the Extracellular side of the membrane. An Ig-like V-type domain is found at 26 to 141 (EQFTITGLER…EEHITEVKVT (116 aa)). Disulfide bonds link Cys49/Cys123 and Cys163/Cys217. Residues 142-231 (ATSSDIKIIM…LLTHQEESIS (90 aa)) form the Ig-like C1-type domain. An N-linked (GlcNAc...) asparagine glycan is attached at Asn200. Residues 238–258 (LFSWKIDWILILSIIACVMIP) traverse the membrane as a helical segment. At 259–283 (YSMTSYLQQHLIHGSCSQRSHHWRK) the chain is on the cytoplasmic side. Residues 284–304 (NAMVCMSSVIAIIGSMLILHL) form a helical membrane-spanning segment. Topologically, residues 305–324 (KQRVPISDQHFELDTLYLED) are extracellular. Residues 325-345 (ISVILCVVIVFNLKLNLLTYY) form a helical membrane-spanning segment. Over 346-359 (RLERKYDGCTPGCK) the chain is Cytoplasmic. A helical membrane pass occupies residues 360 to 380 (ACFYILKIIIIILPFVFTFGC). Over 381-414 (YNAIFLKYHQLQKKVSIPDPLYYFYTSWLVNMEM) the chain is Extracellular. Residues 415–435 (LGVFLVFFPTFINLIEFSQFI) form a helical membrane-spanning segment. Topologically, residues 436–458 (KTVPKPIWLCQENMREDDAIRHR) are cytoplasmic.

Belongs to the SKINT family. Expressed in skin and thymus.

It is found in the membrane. Functionally, may act by engaging a cell surface molecule on immature T-cells in the embryonic thymus. The sequence is that of Selection and upkeep of intraepithelial T-cells protein 3 (Skint3) from Mus musculus (Mouse).